The following is a 97-amino-acid chain: Cysteine-rich and transmembrane domain-containing protein 1 (97 aa).

Over residues 1 to 40 (MNQENPPPYPGPGPTAPYPPYPPQPMGPGPMGGPYPPPQG) the composition is skewed to pro residues. A disordered region spans residues 1 to 61 (MNQENPPPYP…QGGPQEPPKT (61 aa)). Residues 41 to 50 (YPYQGYPQYG) are compositionally biased toward low complexity. The chain crosses the membrane as a helical span at residues 74-91 (LGPSTCLTACWTALCCCC).

The protein belongs to the CYSTM1 family.

Its subcellular location is the membrane. In Homo sapiens (Human), this protein is Cysteine-rich and transmembrane domain-containing protein 1 (CYSTM1).